The sequence spans 236 residues: Rab-like protein 3 (236 aa).

The interval 1 to 236 is small GTPase-like; it reads MASLDRVKVL…AGTLKSLHYD (236 aa). GTP-binding positions include 16 to 21, 148 to 150, and 179 to 180; these read GVGKSS, KLD, and DC.

It belongs to the small GTPase superfamily. Rab family. In terms of assembly, homodimer. Interacts with GPR89; the interaction stabilizes GPR89. Interacts with RAP1GDS1.

In terms of biological role, required for KRAS signaling regulation and modulation of cell proliferation. Regulator of KRAS prenylation, and probably prenylation of other small GTPases. Required for lymphocyte development and function. Not required for myeloid cell development. This Homo sapiens (Human) protein is Rab-like protein 3 (RABL3).